The sequence spans 509 residues: Bifunctional purine biosynthesis protein PurH (509 aa).

The region spanning 1-145 is the MGS-like domain; that stretch reads MIKRALISVF…KSFKDVVVIS (145 aa).

Belongs to the PurH family.

It catalyses the reaction (6R)-10-formyltetrahydrofolate + 5-amino-1-(5-phospho-beta-D-ribosyl)imidazole-4-carboxamide = 5-formamido-1-(5-phospho-D-ribosyl)imidazole-4-carboxamide + (6S)-5,6,7,8-tetrahydrofolate. The enzyme catalyses IMP + H2O = 5-formamido-1-(5-phospho-D-ribosyl)imidazole-4-carboxamide. Its pathway is purine metabolism; IMP biosynthesis via de novo pathway; 5-formamido-1-(5-phospho-D-ribosyl)imidazole-4-carboxamide from 5-amino-1-(5-phospho-D-ribosyl)imidazole-4-carboxamide (10-formyl THF route): step 1/1. It participates in purine metabolism; IMP biosynthesis via de novo pathway; IMP from 5-formamido-1-(5-phospho-D-ribosyl)imidazole-4-carboxamide: step 1/1. This chain is Bifunctional purine biosynthesis protein PurH, found in Brachyspira hyodysenteriae (strain ATCC 49526 / WA1).